We begin with the raw amino-acid sequence, 381 residues long: Lipid-A-disaccharide synthase (381 aa).

This sequence belongs to the LpxB family.

The enzyme catalyses 2-N,3-O-bis[(3R)-3-hydroxytetradecanoyl]-alpha-D-glucosaminyl 1-phosphate + UDP-2-N,3-O-bis[(3R)-3-hydroxytetradecanoyl]-alpha-D-glucosamine = lipid A disaccharide (E. coli) + UDP + H(+). The catalysed reaction is a lipid X + a UDP-2-N,3-O-bis[(3R)-3-hydroxyacyl]-alpha-D-glucosamine = a lipid A disaccharide + UDP + H(+). It functions in the pathway glycolipid biosynthesis; lipid IV(A) biosynthesis; lipid IV(A) from (3R)-3-hydroxytetradecanoyl-[acyl-carrier-protein] and UDP-N-acetyl-alpha-D-glucosamine: step 5/6. Its function is as follows. Condensation of UDP-2,3-diacylglucosamine and 2,3-diacylglucosamine-1-phosphate to form lipid A disaccharide, a precursor of lipid A, a phosphorylated glycolipid that anchors the lipopolysaccharide to the outer membrane of the cell. The protein is Lipid-A-disaccharide synthase of Erwinia tasmaniensis (strain DSM 17950 / CFBP 7177 / CIP 109463 / NCPPB 4357 / Et1/99).